We begin with the raw amino-acid sequence, 186 residues long: Ribonuclease M5 (186 aa).

Residues 4 to 94 (KEIIVVEGRD…AKPKNKRGIG (91 aa)) enclose the Toprim domain. 3 residues coordinate Mg(2+): E10, D56, and D58.

The protein belongs to the ribonuclease M5 family. Requires ribosomal protein L18 (rplR) for catalysis; it can be replaced by 30% dimethylsulfoxide suggesting L18 functions as an rRNA folding chaperone. Mg(2+) serves as cofactor. Mn(2+) is required as a cofactor. Requires Ca(2+) as cofactor.

The protein resides in the cytoplasm. It catalyses the reaction Endonucleolytic cleavage of RNA, removing 21 and 42 nucleotides, respectively, from the 5'- and 3'-termini of a 5S-rRNA precursor.. Functionally, required for correct processing of both the 5' and 3' ends of 5S rRNA precursor. Cleaves both sides of a double-stranded region yielding mature 5S rRNA in one step. Releases 5'-phosphoryl and 3'-hydroxy termini. The chain is Ribonuclease M5 from Bacillus subtilis (strain 168).